The following is a 466-amino-acid chain: Benzoate transport protein (466 aa).

Topologically, residues 1-22 (MSREINVNQMIDDSKLTPFHWR) are cytoplasmic. Residues 23–43 (VIILSTLIIIFDGYDLVIYGV) traverse the membrane as a helical segment. Topologically, residues 44 to 60 (ALPLLMKEWAIDPVTAG) are periplasmic. The helical transmembrane segment at 61–81 (FIGSIALFGMMFGALIFGTIA) threads the bilayer. The Cytoplasmic portion of the chain corresponds to 82–93 (DKLEHLGVSRKK). A helical membrane pass occupies residues 94-114 (VIAVCIILFSLCTVLCGFSET). At 115–119 (TTQFS) the chain is on the periplasmic side. A helical membrane pass occupies residues 120-140 (IFRFLAGVGIGGVMPNVIALV). Over 141–150 (SEYAPKKFKS) the chain is Cytoplasmic. Residues 151-171 (FFVTLMFSGYAIGGMTAAFLG) traverse the membrane as a helical segment. Topologically, residues 172-181 (SILVPLYGWK) are periplasmic. Residues 182–202 (IMFMIAGIPLVLLLPLMKVLP) form a helical membrane-spanning segment. Residues 203-258 (ESIDYLVRKKKDETVRFIMTKMVPSYQYQPDHVFVLNSSNQNQAQAPVKMIFQEQR) lie on the Cytoplasmic side of the membrane. A helical membrane pass occupies residues 259 to 279 (AFSTMMFWCSIFMTLIMVYAL). Topologically, residues 280–297 (GNWLPKLMIEAGYNLSKS) are periplasmic. A helical transmembrane segment spans residues 298 to 318 (LIFLFSLNVGGMIGSILGGYL). The Cytoplasmic segment spans residues 319–325 (ADRYNVK). The helical transmembrane segment at 326-346 (FVTMGLLLLGAISLSLLSFQF) threads the bilayer. Over 347-348 (SS) the chain is Periplasmic. The helical transmembrane segment at 349–369 (VILYILIACAGAASIGAQIML) threads the bilayer. Topologically, residues 370–387 (LAYMAKFYAPNVRSTGIG) are cytoplasmic. A helical membrane pass occupies residues 388–408 (WGLGMGRVGAILGPILTGWLL). Topologically, residues 409 to 414 (SLQLPH) are periplasmic. The chain crosses the membrane as a helical span at residues 415–435 (FYNFLALSIPAVLGIVTVFLI). Topologically, residues 436–466 (NDRRMYQPEPISPIANQNDTTTVKVNEAVSH) are cytoplasmic.

Belongs to the major facilitator superfamily. Aromatic acid:H(+) symporter (AAHS) (TC 2.A.1.15) family.

It localises to the cell inner membrane. In terms of biological role, probable uptake of benzoate. The polypeptide is Benzoate transport protein (benK) (Acinetobacter baylyi (strain ATCC 33305 / BD413 / ADP1)).